We begin with the raw amino-acid sequence, 211 residues long: MKAQKYSKEGKLISEIELPSALFESKLSVASIYEAIKAENANLRSGNHATKTRSEVRGGGKKPWSQKGTGHARQGSTRAPHWVGGGTVHGPQKRDYSYKVSSKLKHKAVLSILNKKAQASAVKVIEDLDPKEYSTKSFDSIFKNMNLRNTGVIGFLVQGESDFVKKSVRNIPTVKYINSKRISCRDILYNRNLVITEAALNEMLTQYGATK.

The segment at 44 to 94 (RSGNHATKTRSEVRGGGKKPWSQKGTGHARQGSTRAPHWVGGGTVHGPQKR) is disordered.

The protein belongs to the universal ribosomal protein uL4 family. In terms of assembly, part of the 50S ribosomal subunit.

In terms of biological role, one of the primary rRNA binding proteins, this protein initially binds near the 5'-end of the 23S rRNA. It is important during the early stages of 50S assembly. It makes multiple contacts with different domains of the 23S rRNA in the assembled 50S subunit and ribosome. Its function is as follows. Forms part of the polypeptide exit tunnel. This Leptospira borgpetersenii serovar Hardjo-bovis (strain JB197) protein is Large ribosomal subunit protein uL4.